The primary structure comprises 51 residues: Defensin-like protein 2A (51 aa).

Pyrrolidone carboxylic acid is present on Gln1. Disulfide bonds link Cys4–Cys51, Cys15–Cys36, Cys21–Cys45, and Cys25–Cys47. Residue Ser8 is modified to Phosphoserine; by CPK.

As to quaternary structure, forms oligomers in its native state.

Its function is as follows. Possesses antifungal activity sensitive to inorganic cations. This is Defensin-like protein 2A from Sinapis alba (White mustard).